Here is a 509-residue protein sequence, read N- to C-terminus: Heat shock 70 kDa protein 14 (509 aa).

Belongs to the heat shock protein 70 family. In terms of assembly, component of ribosome-associated complex (RAC), a heterodimer composed of Hsp70/DnaK-type chaperone HSPA14 and Hsp40/DnaJ-type chaperone DNAJC2.

The protein localises to the cytoplasm. It is found in the cytosol. Component of the ribosome-associated complex (RAC), a complex involved in folding or maintaining nascent polypeptides in a folding-competent state. In the RAC complex, binds to the nascent polypeptide chain, while DNAJC2 stimulates its ATPase activity. This Bos taurus (Bovine) protein is Heat shock 70 kDa protein 14 (HSPA14).